The sequence spans 506 residues: Zinc finger protein MAGPIE (506 aa).

The tract at residues 1-53 (MTTEDQTISSSGGYVQSSSTTDHVDHHHHDQHESLNPPLVKKKRNLPGNPDPE) is disordered. The segment covering 9 to 21 (SSSGGYVQSSSTT) has biased composition (low complexity). Basic and acidic residues predominate over residues 22–33 (DHVDHHHHDQHE). Ser60 bears the Phosphoserine mark. 2 consecutive C2H2-type zinc fingers follow at residues 70–92 (FLCEICGKGFQRDQNLQLHRRGH) and 111–141 (YVCPEKSCVHHHPTRALGDLTGIKKHFCRKH). Residues 133–140 (IKKHFCRK) carry the Nuclear localization signal motif. A C2H2-type 2; degenerate zinc finger spans residues 146 to 169 (WKCEKCAKRYAVQSDWKAHSKTCG). 8 residues coordinate Zn(2+): Cys148, Cys151, His164, Cys168, Cys175, Cys177, His190, and Cys194. A CCHC-type 2; atypical zinc finger spans residues 173-196 (YRCDCGTIFSRRDSFITHRAFCDA). An SHR-binding region spans residues 183–195 (RRDSFITHRAFCD).

Interacts with SHR, SCR and JKD, but not with itself. Interacts with SIEL. Binds to RGA and SCL3 competitively in the nucleus. Expressed in the ground tissue and stele cells of embryos and 2-days post-germination roots but not in the quiescent center. Detected only in cells that perform asymmetric cell divisions. In roots, present in cortex, endodermis, and pericycle layer.

It is found in the nucleus. Functionally, transcription factor that regulates tissue boundaries and asymmetric cell division. Contributes to the sequestration of 'SHORT-ROOT' to the nucleus. Interacts with the SCR and MGP promoters. Does not show transcription activity by itself, but regulates the transcription of downstream genes through interaction with other transcription factors. Binds DNA via its zinc fingers. Recognizes and binds to SCL3 promoter sequence 5'-AGACAA-3' to promote its expression when in complex with RGA. Positively involved in gibberellic acid (GA) signaling. The chain is Zinc finger protein MAGPIE from Arabidopsis thaliana (Mouse-ear cress).